The sequence spans 302 residues: Serine/threonine-protein phosphatase alpha-3 isoform (302 aa).

Mn(2+)-binding residues include Asp-62, His-64, Asp-90, and Asn-122. Residue His-123 is the Proton donor of the active site. Mn(2+)-binding residues include His-171 and His-246.

The protein belongs to the PPP phosphatase family. PP-1 subfamily. Interacts with Nop17l. Mn(2+) serves as cofactor.

It catalyses the reaction O-phospho-L-seryl-[protein] + H2O = L-seryl-[protein] + phosphate. The catalysed reaction is O-phospho-L-threonyl-[protein] + H2O = L-threonyl-[protein] + phosphate. This is Serine/threonine-protein phosphatase alpha-3 isoform (Pp1-13C) from Drosophila melanogaster (Fruit fly).